A 192-amino-acid polypeptide reads, in one-letter code: Putative molybdenum cofactor guanylyltransferase (192 aa).

Residues 8-10 (LAG), Lys21, Asp67, and Asp101 each bind GTP. Asp101 provides a ligand contact to Mg(2+).

This sequence belongs to the MobA family. Monomer. It depends on Mg(2+) as a cofactor.

The protein resides in the cytoplasm. It catalyses the reaction Mo-molybdopterin + GTP + H(+) = Mo-molybdopterin guanine dinucleotide + diphosphate. Its function is as follows. Transfers a GMP moiety from GTP to Mo-molybdopterin (Mo-MPT) cofactor (Moco or molybdenum cofactor) to form Mo-molybdopterin guanine dinucleotide (Mo-MGD) cofactor. This is Putative molybdenum cofactor guanylyltransferase from Neisseria meningitidis serogroup B (strain ATCC BAA-335 / MC58).